Reading from the N-terminus, the 172-residue chain is MRAFIVGRWQPFHKGHLEIIKKISEEVDEIIIGIGSCQRSHTLTDPFTAGERIMMITKALGRYNINYYIIPINDIDFNAVWVSCVESLTPPFDTVYTGNSLVRELFSEKNYVVKKPELYNRKEYSGTEIRKKMLKGEKWEHFVPEEVVDVILEIDGIGRIKRLDEKDYDDYF.

This sequence belongs to the archaeal NMN adenylyltransferase family.

It localises to the cytoplasm. The enzyme catalyses beta-nicotinamide D-ribonucleotide + ATP + H(+) = diphosphate + NAD(+). It functions in the pathway cofactor biosynthesis; NAD(+) biosynthesis; NAD(+) from nicotinamide D-ribonucleotide: step 1/1. This chain is Nicotinamide-nucleotide adenylyltransferase, found in Methanococcus vannielii (strain ATCC 35089 / DSM 1224 / JCM 13029 / OCM 148 / SB).